Consider the following 414-residue polypeptide: Dothistromin biosynthesis peroxidase dotB (414 aa).

The signal sequence occupies residues 1–18; that stretch reads MHFFSAIVLTCLASTAVA. Cysteine 72 provides a ligand contact to heme. 3 N-linked (GlcNAc...) asparagine glycosylation sites follow: asparagine 187, asparagine 241, and asparagine 328.

Belongs to the chloroperoxidase family. The cofactor is heme b.

Its pathway is mycotoxin biosynthesis. In terms of biological role, peroxidase; part of the fragmented gene cluster that mediates the biosynthesis of dothistromin (DOTH), a polyketide toxin very similar in structure to the aflatoxin precursor, versicolorin B. The first step of the pathway is the conversion of acetate to norsolorinic acid (NOR) and requires the fatty acid synthase subunits hexA and hexB, as well as the polyketide synthase pksA. PksA combines a hexanoyl starter unit and 7 malonyl-CoA extender units to synthesize the precursor NOR. The hexanoyl starter unit is provided to the acyl-carrier protein (ACP) domain by the fungal fatty acid synthase hexA/hexB. The second step is the conversion of NOR to averantin (AVN) and requires the norsolorinic acid ketoreductase nor1, which catalyzes the dehydration of norsolorinic acid to form (1'S)-averantin. The cytochrome P450 monooxygenase avnA then catalyzes the hydroxylation of AVN to 5'hydroxyaverantin (HAVN). The next step is performed by adhA that transforms HAVN to averufin (AVF). Averufin might then be converted to hydroxyversicolorone by cypX and avfA. Hydroxyversicolorone is further converted versiconal hemiacetal acetate (VHA) by moxY. VHA is then the substrate for the versiconal hemiacetal acetate esterase est1 to yield versiconal (VAL). Versicolorin B synthase vbsA then converts VAL to versicolorin B (VERB) by closing the bisfuran ring. Then, the activity of the versicolorin B desaturase verB leads to versicolorin A (VERA). DotB, a predicted chloroperoxidase, may perform epoxidation of the A-ring of VERA. Alternatively, a cytochrome P450, such as cypX or avnA could catalyze this step. It is also possible that another, uncharacterized, cytochrome P450 enzyme is responsible for this step. Opening of the epoxide could potentially be achieved by the epoxide hydrolase epoA. However, epoA seems not to be required for DOTH biosynthesis, but other epoxide hydrolases may have the ability to complement this hydrolysis. Alternatively, opening of the epoxide ring could be achieved non-enzymatically. The next step is the deoxygenation of ring A to yield the 5,8-dihydroxyanthraquinone which is most likely catalyzed by the NADPH dehydrogenase encoded by ver1. The last stages of DOTH biosynthesis are proposed to involve hydroxylation of the bisfuran. OrdB and norB might have oxidative roles here. An alternative possibility is that cytochrome P450 monoogenases such as avnA and cypX might perform these steps in addition to previously proposed steps. This is Dothistromin biosynthesis peroxidase dotB from Dothistroma septosporum (Red band needle blight fungus).